Here is a 257-residue protein sequence, read N- to C-terminus: Golgi SNAP receptor complex member 1-2 (257 aa).

The Cytoplasmic portion of the chain corresponds to 1 to 235; the sequence is MTESSLDLQE…GSIKRKRSRD (235 aa). Asparagine 51 carries the phosphoserine modification. A coiled-coil region spans residues 113-147; sequence TQKLARHRDILHEYTQEFRRIKGNINSLREHAELL. Residues 236 to 256 traverse the membrane as a helical; Anchor for type IV membrane protein segment; the sequence is TLILSAVIAACTLFLIIYWLS. Position 257 (lysine 257) is a topological domain, vesicular.

It belongs to the GOSR1 family. As to quaternary structure, component of several multiprotein Golgi SNARE complexes.

Its subcellular location is the golgi apparatus membrane. It is found in the endoplasmic reticulum membrane. Involved in transport from the ER to the Golgi apparatus as well as in intra-Golgi transport. It belongs to a super-family of proteins called t-SNAREs or soluble NSF (N-ethylmaleimide-sensitive factor) attachment protein receptor. The protein is Golgi SNAP receptor complex member 1-2 (GOS12) of Arabidopsis thaliana (Mouse-ear cress).